Consider the following 347-residue polypeptide: Inosamine-phosphate amidinotransferase 1 (347 aa).

Active-site residues include Asp179 and His227. Residue Cys332 is the Amidino-cysteine intermediate of the active site.

Belongs to the amidinotransferase family. As to quaternary structure, homodimer.

It catalyses the reaction 1-amino-1-deoxy-scyllo-inositol 4-phosphate + L-arginine = 1-guanidino-1-deoxy-scyllo-inositol 4-phosphate + L-ornithine. It functions in the pathway antibiotic biosynthesis; streptomycin biosynthesis. Its function is as follows. Catalyzes two non-consecutive transamidination reactions. It converts scyllo-inosamine 4-phosphate into N-amidino-scyllo-inosamine 4-phosphate and N1-amidinostreptamine 6-phosphate into streptidine 6-phosphate. In Streptomyces griseus, this protein is Inosamine-phosphate amidinotransferase 1 (strB1).